Consider the following 705-residue polypeptide: ATP-dependent DNA helicase Q-like 2 (705 aa).

Positions 1-30 (MESEAIQEDLQNLDVELKDVQGQISALIEH) form a coiled coil. The 176-residue stretch at 98–273 (INAIMTGRDV…IEMLHIPKCV (176 aa)) folds into the Helicase ATP-binding domain. 111–118 (MAAGGGKS) serves as a coordination point for ATP. A DEAH box motif is present at residues 217–220 (DEAH). The Helicase C-terminal domain maps to 298-450 (VVDEIAEFIR…DIVRYCQSKT (153 aa)). An HRDC domain is found at 591–670 (SITFSGLELK…MRHEAVSEQL (80 aa)). The tract at residues 668 to 705 (EQLVEDPTKEETCKSRLRKRAKTQKDVVLVESSGEEEA) is disordered.

Belongs to the helicase family. RecQ subfamily. In terms of assembly, interacts with WEX. The cofactor is Mg(2+). Mn(2+) serves as cofactor. As to expression, expressed in shoots and flowers. Expressed in young leaves, inflorescences, roots, shoot apical meristem, young siliques, and mature green siliques.

It localises to the nucleus. The enzyme catalyses Couples ATP hydrolysis with the unwinding of duplex DNA by translocating in the 3'-5' direction.. It catalyses the reaction ATP + H2O = ADP + phosphate + H(+). 3'-5' DNA helicase that may play a role in the repair of DNA. Its DNA unwinding activity in vitro is dependent on magnesium, and ATP or dATP. Can use GTP/dGTP, CTP/dCTP or UTP/dUTP as nucleotide cofactors. Catalyzes Holliday junction branch migration and replication fork regression. Disrupts D-loop structures. Unwinds G-quadruplex DNA, found in telomeric DNA. The polypeptide is ATP-dependent DNA helicase Q-like 2 (Arabidopsis thaliana (Mouse-ear cress)).